The primary structure comprises 529 residues: Transcription activator of gluconeogenesis ERT1 (529 aa).

The interval 1–31 (MCTPDENDYKTSTDPDTSANTNHTLEKKKRK) is disordered. The segment covering 14–23 (DPDTSANTNH) has biased composition (polar residues). The zn(2)-C6 fungal-type DNA-binding region spans 40–68 (CVNCSRLHVSCEAKRPCLRCISKGLTATC). The segment covering 174–193 (SNSTIGNSSNNSPTGTNTSP) has biased composition (low complexity). Residues 174 to 198 (SNSTIGNSSNNSPTGTNTSPEETEM) are disordered. The PAS domain occupies 408-480 (TLLEYVKFIA…KTLSKVAYRD (73 aa)).

The protein belongs to the ERT1/acuK family.

Its subcellular location is the cytoplasm. It localises to the nucleus. In terms of biological role, transcription factor which regulates nonfermentable carbon utilization. Activator of gluconeogenetic genes like PCK1. Involved in restriction of Ty1 transposition. The polypeptide is Transcription activator of gluconeogenesis ERT1 (ERT1) (Saccharomyces cerevisiae (strain ATCC 204508 / S288c) (Baker's yeast)).